The sequence spans 585 residues: Glutamate decarboxylase 2 (585 aa).

Residues 1–25 (MASPGSGFWSFGSEDGSGDPENPGT) form a disordered region. Residues Ser3, Ser6, Ser10, Ser13, and Ser17 each carry the phosphoserine modification. S-palmitoyl cysteine attachment occurs at residues Cys30 and Cys45. 181–183 (QLS) serves as a coordination point for substrate. Lys396 carries the post-translational modification N6-(pyridoxal phosphate)lysine. Position 558 (Arg558) interacts with substrate.

The protein belongs to the group II decarboxylase family. As to quaternary structure, homodimer. Pyridoxal 5'-phosphate serves as cofactor. Post-translationally, the N-terminus is blocked. In terms of processing, phosphorylated; which does not affect kinetic parameters or subcellular location. Palmitoylated; which is required for presynaptic clustering.

The protein resides in the cytoplasm. Its subcellular location is the cytosol. It localises to the cytoplasmic vesicle. It is found in the presynaptic cell membrane. The protein localises to the golgi apparatus membrane. The enzyme catalyses L-glutamate + H(+) = 4-aminobutanoate + CO2. Catalyzes the production of GABA. The sequence is that of Glutamate decarboxylase 2 (Gad2) from Rattus norvegicus (Rat).